The following is a 515-amino-acid chain: Elongation factor 1-alpha S (515 aa).

The tr-type G domain maps to 5–258 (KTHINLVVIG…DAMKPPKRPT (254 aa)). Residues 14 to 21 (GHVDAGKS) are G1. Position 14-21 (14-21 (GHVDAGKS)) interacts with GTP. At K55 the chain carries N6,N6-dimethyllysine. The segment at 70–74 (GITID) is G2. K79 is modified (N6,N6,N6-trimethyllysine). The G3 stretch occupies residues 91–94 (DAPG). Residues 91 to 95 (DAPGH) and 151 to 154 (NKMD) contribute to the GTP site. The G4 stretch occupies residues 151–154 (NKMD). Residues 187-206 (KKDKGDKKKGDKKEKKDKKD) are disordered. Over residues 189–206 (DKGDKKKGDKKEKKDKKD) the composition is skewed to basic and acidic residues. The G5 stretch occupies residues 222 to 224 (SGW). K289 is subject to N6-methyllysine. At K334 the chain carries N6,N6,N6-trimethyllysine. Residues 396–419 (KRGKQTHDVSDDTEWATKDDAEPR) form a disordered region. Residues 398 to 419 (GKQTHDVSDDTEWATKDDAEPR) are compositionally biased toward basic and acidic residues. The residue at position 441 (K441) is an N6,N6,N6-trimethyllysine.

This sequence belongs to the TRAFAC class translation factor GTPase superfamily. Classic translation factor GTPase family. EF-Tu/EF-1A subfamily.

The protein resides in the cytoplasm. Functionally, this protein promotes the GTP-dependent binding of aminoacyl-tRNA to the A-site of ribosomes during protein biosynthesis. This is Elongation factor 1-alpha S (TEF-S) from Porphyra purpurea (Red seaweed).